The sequence spans 67 residues: Large ribosomal subunit protein bL32 (67 aa).

Residues 1–19 (MAVPKRKMSRANTRARRAQ) show a composition bias toward basic residues. Residues 1–20 (MAVPKRKMSRANTRARRAQW) are disordered.

This sequence belongs to the bacterial ribosomal protein bL32 family.

The sequence is that of Large ribosomal subunit protein bL32 from Paenarthrobacter aurescens (strain TC1).